The primary structure comprises 152 residues: Snaclec coagulation factor IX/factor X-binding protein subunit A (152 aa).

The first 23 residues, 1 to 23 (MGRFIFMSFGLLVVAASLRGTGA), serve as a signal peptide directing secretion. The C-type lectin domain maps to 24–152 (DCLSGWSSYE…GQQNPFVCEA (129 aa)). 3 disulfides stabilise this stretch: Cys25–Cys36, Cys53–Cys150, and Cys125–Cys142. Ca(2+)-binding residues include Ser64, Glu66, and Glu70. Residue Glu151 participates in Ca(2+) binding.

The protein belongs to the snaclec family. In terms of assembly, heterodimer of subunits A and B; disulfide-linked. In terms of tissue distribution, expressed by the venom gland.

The protein localises to the secreted. In terms of biological role, anticoagulant protein which binds to the gamma-carboxyglutamic acid-domain regions of factors IX (F9) and factor X (F10) in the presence of calcium with a 1 to 1 stoichiometry. The polypeptide is Snaclec coagulation factor IX/factor X-binding protein subunit A (Protobothrops flavoviridis (Habu)).